The primary structure comprises 227 residues: Prolactin (227 aa).

Positions 1–28 (MDSKWSRRTGSLLLLLVSNLLLCKSTAS) are cleaved as a signal peptide. Residues Cys32 and Cys39 are joined by a disulfide bond. A phosphoserine mark is found at Ser54, Ser62, and Ser118. Disulfide bonds link Cys86/Cys202 and Cys219/Cys227.

This sequence belongs to the somatotropin/prolactin family. Interacts with PRLR.

Its subcellular location is the secreted. In terms of biological role, prolactin acts primarily on the mammary gland by promoting lactation. This Oryctolagus cuniculus (Rabbit) protein is Prolactin (PRL).